The primary structure comprises 698 residues: Inner centromere protein SLI15 (698 aa).

Serine 268 carries the phosphoserine modification. Disordered stretches follow at residues 365-390 (KNKI…FDKT), 405-444 (EQKK…EVKN), and 455-474 (RPTK…TSQT). 2 stretches are compositionally biased toward polar residues: residues 422–439 (RPHS…SSPS) and 459–474 (ASIS…TSQT). Serine 489 bears the Phosphoserine mark. Residues 535–560 (IMRSQQEHHRRKQEKQKRMSHLEQDL) are disordered. The segment covering 550–560 (QKRMSHLEQDL) has biased composition (basic and acidic residues).

The protein belongs to the INCENP family. In terms of assembly, component of the CPC complex at least composed of IPL1, BIR1 and SLI15. Post-translationally, phosphorylated by serine/threonine protein kinase IPL1.

It is found in the nucleus. Its subcellular location is the cytoplasm. The protein localises to the cytoskeleton. The protein resides in the spindle. It localises to the chromosome. It is found in the centromere. Its subcellular location is the kinetochore. In terms of biological role, component of the chromosomal passenger complex (CPC), a complex that acts as a key regulator of mitosis. Stimulates IPL1 kinase activity and facilitates its association with the mitotic spindle. Has a role in attaching the kinetochores to the microtubules and ensuring that sister kinetochores connect to opposite poles. In Saccharomyces cerevisiae (strain ATCC 204508 / S288c) (Baker's yeast), this protein is Inner centromere protein SLI15 (SLI15).